Reading from the N-terminus, the 892-residue chain is Translation initiation factor IF-2 (892 aa).

2 stretches are compositionally biased toward basic and acidic residues: residues V93–V159 and D166–K216. The disordered stretch occupies residues V93–P304. The segment covering G254–K269 has biased composition (basic residues). The span at H270–A282 shows a compositional bias: basic and acidic residues. In terms of domain architecture, tr-type G spans P391 to K560. The segment at G400–T407 is G1. GTP is bound at residue G400–T407. Residues G425 to H429 are G2. Positions D446–G449 are G3. Residues D446–H450 and N500–D503 each bind GTP. Residues N500–D503 are G4. The interval S536–K538 is G5.

This sequence belongs to the TRAFAC class translation factor GTPase superfamily. Classic translation factor GTPase family. IF-2 subfamily.

Its subcellular location is the cytoplasm. In terms of biological role, one of the essential components for the initiation of protein synthesis. Protects formylmethionyl-tRNA from spontaneous hydrolysis and promotes its binding to the 30S ribosomal subunits. Also involved in the hydrolysis of GTP during the formation of the 70S ribosomal complex. The polypeptide is Translation initiation factor IF-2 (Salmonella gallinarum (strain 287/91 / NCTC 13346)).